Here is a 153-residue protein sequence, read N- to C-terminus: MTAKFTVLVLNGPNLNMLGKREPTIYGNQGLSEIIADLGLQADQKNIVLKHLQSNAEHELVDAIHNGYQQVDFIIINPAAFTHTSVAIRDALLSVAIPFIEVHLSNVHAREAFRKHSYLSDIATGVICGFGAQGYSFALDAAYTYLNKAQVDK.

The active-site Proton acceptor is the tyrosine 26. Asparagine 77, histidine 83, and aspartate 90 together coordinate substrate. Histidine 103 acts as the Proton donor in catalysis. Residues 104 to 105 (LS) and arginine 114 each bind substrate.

This sequence belongs to the type-II 3-dehydroquinase family. Homododecamer.

It carries out the reaction 3-dehydroquinate = 3-dehydroshikimate + H2O. It functions in the pathway metabolic intermediate biosynthesis; chorismate biosynthesis; chorismate from D-erythrose 4-phosphate and phosphoenolpyruvate: step 3/7. Its function is as follows. Catalyzes a trans-dehydration via an enolate intermediate. This is 3-dehydroquinate dehydratase from Colwellia psychrerythraea (strain 34H / ATCC BAA-681) (Vibrio psychroerythus).